The chain runs to 241 residues: Synaptogyrin (241 aa).

The MARVEL domain maps to 30–179; the sequence is FAMKPQVVIR…CALMAYKRFL (150 aa). 4 consecutive transmembrane segments (helical) span residues 34–54, 81–101, 115–135, and 155–175; these read PQVVIRALCWLFSVVVFGCIS, MVGVFGFLASMGFMGGEFLFE, ADMGFSALWTFMYFVAFLYLW, and TAIWFCLFSIVSWALCALMAY. The tract at residues 216–241 is disordered; sequence ASPFGQPQQGGMEQQQSGMEYQQPTY. A compositionally biased stretch (low complexity) spans 220–241; sequence GQPQQGGMEQQQSGMEYQQPTY.

This sequence belongs to the synaptogyrin family.

The protein resides in the cytoplasmic vesicle membrane. It localises to the cytoplasmic vesicle. Its subcellular location is the secretory vesicle membrane. The protein localises to the secretory vesicle. It is found in the synaptic vesicle membrane. In terms of biological role, required for the correct formation of synaptic vesicles at nerve terminals and has a role in the regulation of the synaptic vesicle exo-endocytic cycle. The polypeptide is Synaptogyrin (Drosophila melanogaster (Fruit fly)).